Here is a 275-residue protein sequence, read N- to C-terminus: 2,3,4,5-tetrahydropyridine-2,6-dicarboxylate N-succinyltransferase (275 aa).

2 residues coordinate substrate: arginine 106 and aspartate 143.

This sequence belongs to the transferase hexapeptide repeat family. As to quaternary structure, homotrimer.

Its subcellular location is the cytoplasm. The catalysed reaction is (S)-2,3,4,5-tetrahydrodipicolinate + succinyl-CoA + H2O = (S)-2-succinylamino-6-oxoheptanedioate + CoA. Its pathway is amino-acid biosynthesis; L-lysine biosynthesis via DAP pathway; LL-2,6-diaminopimelate from (S)-tetrahydrodipicolinate (succinylase route): step 1/3. This is 2,3,4,5-tetrahydropyridine-2,6-dicarboxylate N-succinyltransferase from Burkholderia mallei (strain NCTC 10247).